The sequence spans 771 residues: DNA polymerase 1 (771 aa).

It belongs to the DNA polymerase type-B family.

The catalysed reaction is DNA(n) + a 2'-deoxyribonucleoside 5'-triphosphate = DNA(n+1) + diphosphate. The sequence is that of DNA polymerase 1 (polI) from Pyrococcus abyssi.